The sequence spans 72 residues: MARVTVEDCLDKVETRFDLVVLASMRANNILKKGYSESADNEKKEKATVVALREIAESEITPDQILRNEIEG.

The protein belongs to the RNA polymerase subunit omega family. In terms of assembly, the RNAP catalytic core consists of 2 alpha, 1 beta, 1 beta' and 1 omega subunit. When a sigma factor is associated with the core the holoenzyme is formed, which can initiate transcription.

The catalysed reaction is RNA(n) + a ribonucleoside 5'-triphosphate = RNA(n+1) + diphosphate. Its function is as follows. Promotes RNA polymerase assembly. Latches the N- and C-terminal regions of the beta' subunit thereby facilitating its interaction with the beta and alpha subunits. This Francisella philomiragia subsp. philomiragia (strain ATCC 25017 / CCUG 19701 / FSC 153 / O#319-036) protein is DNA-directed RNA polymerase subunit omega.